Consider the following 391-residue polypeptide: Trehalose-phosphate phosphatase (391 aa).

Asp147 (nucleophile) is an active-site residue. Mg(2+) contacts are provided by Asp147, Asp149, and Asp330. Residue 147–149 coordinates substrate; the sequence is DFD.

It belongs to the trehalose phosphatase family. Mg(2+) serves as cofactor.

It carries out the reaction alpha,alpha-trehalose 6-phosphate + H2O = alpha,alpha-trehalose + phosphate. The protein operates within glycan biosynthesis; trehalose biosynthesis. Its function is as follows. Removes the phosphate from trehalose 6-phosphate to produce free trehalose. The chain is Trehalose-phosphate phosphatase (otsB) from Mycobacterium avium (strain 104).